Reading from the N-terminus, the 202-residue chain is Translation initiation factor 2 subunit beta (202 aa).

A TRAM domain is found at 145–202 (AIEEGGTYELRIDAVGSKGDGIAKIDKYTVFVPGATKGDVVKVKIKKISGNLAFSERA).

Belongs to the eIF-2-beta/eIF-5 family. As to quaternary structure, heterotrimer composed of an alpha, a beta and a gamma chain.

In terms of biological role, eIF-2 functions in the early steps of protein synthesis by forming a ternary complex with GTP and initiator tRNA. The chain is Translation initiation factor 2 subunit beta (eif2b) from Methanosarcina mazei (strain ATCC BAA-159 / DSM 3647 / Goe1 / Go1 / JCM 11833 / OCM 88) (Methanosarcina frisia).